Here is a 270-residue protein sequence, read N- to C-terminus: Cell division protein DivIB (270 aa).

The Cytoplasmic segment spans residues Met1–His28. The helical transmembrane segment at Leu29 to Pro49 threads the bilayer. The Extracellular portion of the chain corresponds to Leu50–Glu270. The region spanning Ser51–Phe119 is the POTRA domain.

This sequence belongs to the FtsQ/DivIB family. DivIB subfamily.

The protein localises to the cell membrane. Its function is as follows. Cell division protein that may be involved in stabilizing or promoting the assembly of the division complex. The protein is Cell division protein DivIB of Listeria monocytogenes serovar 1/2a (strain ATCC BAA-679 / EGD-e).